Here is a 122-residue protein sequence, read N- to C-terminus: Large ribosomal subunit protein uL14 (122 aa).

Belongs to the universal ribosomal protein uL14 family. As to quaternary structure, part of the 50S ribosomal subunit. Forms a cluster with proteins L3 and L19. In the 70S ribosome, L14 and L19 interact and together make contacts with the 16S rRNA in bridges B5 and B8.

Its function is as follows. Binds to 23S rRNA. Forms part of two intersubunit bridges in the 70S ribosome. The polypeptide is Large ribosomal subunit protein uL14 (Nitratidesulfovibrio vulgaris (strain ATCC 29579 / DSM 644 / CCUG 34227 / NCIMB 8303 / VKM B-1760 / Hildenborough) (Desulfovibrio vulgaris)).